The following is a 286-amino-acid chain: Protein PXR1 (286 aa).

The tract at residues 1 to 20 is disordered; sequence MGLAGTKVKQRFGLDPRNTS. Residues 25 to 71 form the G-patch domain; the sequence is KSRFGHRYLESMGWAPGKGLGLVEHATTTHVKVSVKDDTVGLGAKLA. The interval 148–255 is disordered; that stretch reads EDESEVNFKS…PRKHDQISNV (108 aa). Over residues 168-198 the composition is skewed to basic and acidic residues; the sequence is PSRDSTSHAKRMRGDESKKSTRDQSKQERKE. The span at 199–230 shows a compositional bias: basic residues; the sequence is KKIKTEKKEKKEKKEKKEKKEKKEKKEKKEKK.

The protein belongs to the PINX1 family.

The protein resides in the nucleus. Its subcellular location is the nucleolus. In terms of biological role, involved in rRNA-processing at A0, A1 and A2 sites and negatively regulates telomerase. The polypeptide is Protein PXR1 (PXR1) (Meyerozyma guilliermondii (strain ATCC 6260 / CBS 566 / DSM 6381 / JCM 1539 / NBRC 10279 / NRRL Y-324) (Yeast)).